A 195-amino-acid chain; its full sequence is Recombination protein RecR (195 aa).

Residues 54–69 (CTICGSYTEDEICSIC) form a C4-type zinc finger. The Toprim domain maps to 77–172 (ATICVVGFPQ…NITRLASGLP (96 aa)).

Belongs to the RecR family.

May play a role in DNA repair. It seems to be involved in an RecBC-independent recombinational process of DNA repair. It may act with RecF and RecO. The chain is Recombination protein RecR from Treponema denticola (strain ATCC 35405 / DSM 14222 / CIP 103919 / JCM 8153 / KCTC 15104).